The chain runs to 695 residues: Elongation factor G 1 (695 aa).

The region spanning 6–281 is the tr-type G domain; it reads TRYRNIGIFA…AVVDYLPNPK (276 aa). Residues 15-22, 79-83, and 133-136 contribute to the GTP site; these read AHVDAGKT, DTPGH, and NKLD.

The protein belongs to the TRAFAC class translation factor GTPase superfamily. Classic translation factor GTPase family. EF-G/EF-2 subfamily.

The protein localises to the cytoplasm. In terms of biological role, catalyzes the GTP-dependent ribosomal translocation step during translation elongation. During this step, the ribosome changes from the pre-translocational (PRE) to the post-translocational (POST) state as the newly formed A-site-bound peptidyl-tRNA and P-site-bound deacylated tRNA move to the P and E sites, respectively. Catalyzes the coordinated movement of the two tRNA molecules, the mRNA and conformational changes in the ribosome. This chain is Elongation factor G 1 (fusA), found in Synechocystis sp. (strain ATCC 27184 / PCC 6803 / Kazusa).